A 403-amino-acid polypeptide reads, in one-letter code: Imidazolonepropionase (403 aa).

Positions 74 and 76 each coordinate Fe(3+). Residues histidine 74 and histidine 76 each contribute to the Zn(2+) site. 4-imidazolone-5-propanoate is bound by residues arginine 83, tyrosine 146, and histidine 179. Tyrosine 146 is a binding site for N-formimidoyl-L-glutamate. Residue histidine 242 participates in Fe(3+) binding. Histidine 242 lines the Zn(2+) pocket. Glutamine 245 is a 4-imidazolone-5-propanoate binding site. A Fe(3+)-binding site is contributed by aspartate 317. Zn(2+) is bound at residue aspartate 317. Residues asparagine 319 and glycine 321 each coordinate N-formimidoyl-L-glutamate. Residue threonine 322 coordinates 4-imidazolone-5-propanoate.

The protein belongs to the metallo-dependent hydrolases superfamily. HutI family. Zn(2+) is required as a cofactor. It depends on Fe(3+) as a cofactor.

The protein localises to the cytoplasm. It catalyses the reaction 4-imidazolone-5-propanoate + H2O = N-formimidoyl-L-glutamate. It functions in the pathway amino-acid degradation; L-histidine degradation into L-glutamate; N-formimidoyl-L-glutamate from L-histidine: step 3/3. Its function is as follows. Catalyzes the hydrolytic cleavage of the carbon-nitrogen bond in imidazolone-5-propanoate to yield N-formimidoyl-L-glutamate. It is the third step in the universal histidine degradation pathway. This chain is Imidazolonepropionase, found in Sphingopyxis alaskensis (strain DSM 13593 / LMG 18877 / RB2256) (Sphingomonas alaskensis).